Here is a 428-residue protein sequence, read N- to C-terminus: D-amino acid dehydrogenase (428 aa).

FAD is bound at residue 3–17 (VVILGSGVVGVASAY).

The protein belongs to the DadA oxidoreductase family. FAD serves as cofactor.

The catalysed reaction is a D-alpha-amino acid + A + H2O = a 2-oxocarboxylate + AH2 + NH4(+). It participates in amino-acid degradation; D-alanine degradation; NH(3) and pyruvate from D-alanine: step 1/1. Oxidative deamination of D-amino acids. This Burkholderia cenocepacia (strain ATCC BAA-245 / DSM 16553 / LMG 16656 / NCTC 13227 / J2315 / CF5610) (Burkholderia cepacia (strain J2315)) protein is D-amino acid dehydrogenase.